The primary structure comprises 109 residues: Iron-sulfur cluster assembly protein CyaY (109 aa).

Belongs to the frataxin family.

Its function is as follows. Involved in iron-sulfur (Fe-S) cluster assembly. May act as a regulator of Fe-S biogenesis. This Bordetella bronchiseptica (strain ATCC BAA-588 / NCTC 13252 / RB50) (Alcaligenes bronchisepticus) protein is Iron-sulfur cluster assembly protein CyaY.